The primary structure comprises 279 residues: Methyltransferase prhM (279 aa).

Residues 124 to 125 (DI) and 152 to 153 (DV) each bind S-adenosyl-L-methionine.

This sequence belongs to the class I-like SAM-binding methyltransferase superfamily.

Its pathway is secondary metabolite biosynthesis; terpenoid biosynthesis. Functionally, methyltransferase; part of the gene cluster that mediates the biosynthesis of paraherquonin, a meroterpenoid with a unique, highly congested hexacyclic molecular architecture. The first step of the pathway is the synthesis of 3,5-dimethylorsellinic acid (DMOA) by the polyketide synthase prhL. Synthesis of DMOA is followed by farnesylation by the prenyltransferase prhE, methylesterification by the methyl-transferase prhM, epoxidation of the prenyl chain by the flavin-dependent monooxygenase prhF, and cyclization of the farnesyl moiety by the terpene cyclase prhH, to yield the tetracyclic intermediate, protoaustinoid A. The short chain dehydrogenase prhI then oxidizes the C-3 alcohol group of the terpene cyclase product to transform protoaustinoid A into protoaustinoid B. The FAD-binding monooxygenase prhJ catalyzes the oxidation of protoaustinoid B into preaustinoid A which is further oxidized into preaustinoid A1 by FAD-binding monooxygenase phrK. Finally, prhA leads to berkeleydione via the berkeleyone B intermediate. PrhA is a multifunctional dioxygenase that first desaturates at C5-C6 to form berkeleyone B, followed by rearrangement of the A/B-ring to form the cycloheptadiene moiety in berkeleydione. Berkeleydione serves as the key intermediate for the biosynthesis of paraherquonin as well as many other meroterpenoids. The cytochrome P450 monooxygenases prhB, prhD, and prhN, as well as the isomerase prhC, are probably involved in the late stage of paraherquonin biosynthesis, after the production of berkeleydione. Especially prhC might be a multifunctional enzyme that catalyzes the D-ring expansion via intramolecular methoxy rearrangement, as well as the hydrolysis of the expanded D-ring. The chain is Methyltransferase prhM from Penicillium brasilianum.